Consider the following 426-residue polypeptide: Serine--tRNA ligase (426 aa).

233 to 235 (TSE) contacts L-serine. 264 to 266 (RSE) contacts ATP. Position 287 (Glu-287) interacts with L-serine. 351–354 (EISS) lines the ATP pocket. Ser-387 is an L-serine binding site.

This sequence belongs to the class-II aminoacyl-tRNA synthetase family. Type-1 seryl-tRNA synthetase subfamily. Homodimer. The tRNA molecule binds across the dimer.

The protein resides in the cytoplasm. It carries out the reaction tRNA(Ser) + L-serine + ATP = L-seryl-tRNA(Ser) + AMP + diphosphate + H(+). The catalysed reaction is tRNA(Sec) + L-serine + ATP = L-seryl-tRNA(Sec) + AMP + diphosphate + H(+). It participates in aminoacyl-tRNA biosynthesis; selenocysteinyl-tRNA(Sec) biosynthesis; L-seryl-tRNA(Sec) from L-serine and tRNA(Sec): step 1/1. In terms of biological role, catalyzes the attachment of serine to tRNA(Ser). Is also able to aminoacylate tRNA(Sec) with serine, to form the misacylated tRNA L-seryl-tRNA(Sec), which will be further converted into selenocysteinyl-tRNA(Sec). This Xylella fastidiosa (strain M12) protein is Serine--tRNA ligase.